The following is a 109-amino-acid chain: Nucleoid-associated protein MADE_1013280 (109 aa).

Positions 86-109 (TSKEKMGDVTGGMPLPPGFKMPGF) are disordered. Residues 99-109 (PLPPGFKMPGF) are compositionally biased toward pro residues.

It belongs to the YbaB/EbfC family. Homodimer.

The protein resides in the cytoplasm. It is found in the nucleoid. In terms of biological role, binds to DNA and alters its conformation. May be involved in regulation of gene expression, nucleoid organization and DNA protection. The polypeptide is Nucleoid-associated protein MADE_1013280 (Alteromonas mediterranea (strain DSM 17117 / CIP 110805 / LMG 28347 / Deep ecotype)).